We begin with the raw amino-acid sequence, 873 residues long: Alanine--tRNA ligase (873 aa).

Zn(2+) contacts are provided by His562, His566, Cys664, and His668.

This sequence belongs to the class-II aminoacyl-tRNA synthetase family. Requires Zn(2+) as cofactor.

It localises to the cytoplasm. It carries out the reaction tRNA(Ala) + L-alanine + ATP = L-alanyl-tRNA(Ala) + AMP + diphosphate. Its function is as follows. Catalyzes the attachment of alanine to tRNA(Ala) in a two-step reaction: alanine is first activated by ATP to form Ala-AMP and then transferred to the acceptor end of tRNA(Ala). Also edits incorrectly charged Ser-tRNA(Ala) and Gly-tRNA(Ala) via its editing domain. The polypeptide is Alanine--tRNA ligase (Photobacterium profundum (strain SS9)).